The primary structure comprises 305 residues: Putative ABC transporter molybdenum-binding protein HVO_B0369 (305 aa).

A signal peptide (tat-type signal) is located at residues M1 to A40.

It belongs to the bacterial solute-binding protein 1 family. WtpA subfamily. In terms of assembly, the complex is composed of two ATP-binding proteins, two transmembrane proteins (HVO_B0370) and a solute-binding protein (HVO_B0369). Post-translationally, predicted to be exported by the Tat system. The position of the signal peptide cleavage has not been experimentally proven.

In terms of biological role, part of an ABC transporter complex involved in molybdenum import. In Haloferax volcanii (strain ATCC 29605 / DSM 3757 / JCM 8879 / NBRC 14742 / NCIMB 2012 / VKM B-1768 / DS2) (Halobacterium volcanii), this protein is Putative ABC transporter molybdenum-binding protein HVO_B0369.